The primary structure comprises 1131 residues: Phytochrome B1 (1131 aa).

Residues 1 to 11 (MASGSRTKHSY) show a composition bias toward basic residues. Residues 1 to 26 (MASGSRTKHSYHNSSQGQAQSSGTSN) form a disordered region. Residues 14–25 (SSQGQAQSSGTS) show a composition bias toward low complexity. Residues 229 to 408 (DIKLLCDTVV…AFGLQLNMEL (180 aa)) enclose the GAF domain. C334 provides a ligand contact to phytochromobilin. PAS domains follow at residues 622–693 (VARE…LRGV) and 756–808 (DYKA…GEIF). In terms of domain architecture, Histidine kinase spans 904-1124 (YICQEVKSPL…MIILDLPMTR (221 aa)).

Belongs to the phytochrome family. Homodimer. Contains one covalently linked phytochromobilin chromophore.

Functionally, regulatory photoreceptor which exists in two forms that are reversibly interconvertible by light: the Pr form that absorbs maximally in the red region of the spectrum and the Pfr form that absorbs maximally in the far-red region. Photoconversion of Pr to Pfr induces an array of morphogenic responses, whereas reconversion of Pfr to Pr cancels the induction of those responses. Pfr controls the expression of a number of nuclear genes including those encoding the small subunit of ribulose-bisphosphate carboxylase, chlorophyll A/B binding protein, protochlorophyllide reductase, rRNA, etc. It also controls the expression of its own gene(s) in a negative feedback fashion. This Solanum lycopersicum (Tomato) protein is Phytochrome B1.